The following is a 1038-amino-acid chain: Protein argonaute 1D (1038 aa).

Disordered regions lie at residues 1–58 and 110–134; these read MGSR…GAAP and APHE…PRSL. Gly residues-rich tracts occupy residues 18–29 and 43–52; these read RGGGRGGGGRGR and GHGGRGGAGY. A compositionally biased stretch (low complexity) spans 115–134; that stretch reads PANVSSPEAASPEASSPRSL. Positions 380–493 constitute a PAZ domain; that stretch reads PVIDFVIQLL…LPMEVCKIVE (114 aa). A Piwi domain is found at 669–990; sequence LLIGLLPDNN…AAFRARFYME (322 aa). The disordered stretch occupies residues 992 to 1021; the sequence is DSSDSGSMASGRGGGSSTSRSTRAAGGGAV.

It belongs to the argonaute family. Ago subfamily.

Its function is as follows. Probably involved in the RNA silencing pathway. May bind to short RNAs such as microRNAs (miRNAs) or short interfering RNAs (siRNAs), and represses the translation of mRNAs which are complementary to them. The sequence is that of Protein argonaute 1D (AGO1D) from Oryza sativa subsp. japonica (Rice).